The following is a 485-amino-acid chain: Retron Mx162 reverse transcriptase (485 aa).

The disordered stretch occupies residues 1-33 (MTARLDPFVPAASPQAVPTPELTAPSSDAAAKR). Positions 167–407 (RWFAFHREVD…TRQRVTGLVV (241 aa)) constitute a Reverse transcriptase domain. Mg(2+) contacts are provided by Asp250, Asp346, and Asp347.

Belongs to the bacterial reverse transcriptase family.

The catalysed reaction is DNA(n) + a 2'-deoxyribonucleoside 5'-triphosphate = DNA(n+1) + diphosphate. With respect to regulation, msDNA synthesis is inhibited by rifampicin and chloramphenicol. Functionally, reverse transcriptase (RT) responsible for synthesis of msDNA-Mx162 (a branched molecule with RNA linked by a 2',5'-phosphodiester bond to ssDNA). The retron transcript serves as primer (from a conserved internal G residue) and template for the reaction, and codes for the RT. The retron is involved in antiviral defense. The chain is Retron Mx162 reverse transcriptase from Myxococcus xanthus.